The sequence spans 411 residues: MKNKYYPLRSSMDELSTKNDNEIDLEKGPLPEYNSEDGSTLPPYSENLNLKDPKQMGANNPNLFNTDESTTPPDYGEDSLSTTHRENHSSGTADNSCASTLKKAILSFIPIFVLNVSAVCYLTYKDALFKDYGKDEWVYFGMWCASCLMILISLWCFYETWIKAVKVTAVFLAQCIKVTAVFLPQCIKVTAVFLAKCVKVTAVFLAKCIKVTAVFLAQCVKVTAISLAKCVKVISIGLFNIRREMMIIIWILWLIICCILFGCVKDGRLNFNKALICSTCTISAVLFLIVSSVCIPIWTLWRALSGMLQVLGIHGIIAVLVNGSMSLFGKHFGWRGYEIEGFVLFFTSSALFLYEMERPGVLKRMRNTTGNVIGYICGVIGDAFRRIENAFRGANDNNNIPLGEMDVEGEV.

Residues 1 to 95 form a disordered region; that stretch reads MKNKYYPLRS…ENHSSGTADN (95 aa). Residues 11–29 are compositionally biased toward basic and acidic residues; it reads SMDELSTKNDNEIDLEKGP. A compositionally biased stretch (polar residues) spans 57-72; sequence GANNPNLFNTDESTTP. The next 6 membrane-spanning stretches (helical) occupy residues 104 to 124, 137 to 157, 244 to 264, 281 to 301, 303 to 323, and 336 to 356; these read AILS…YLTY, WVYF…LWCF, EMMI…FGCV, TISA…WTLW, ALSG…LVNG, and GYEI…LYEM.

The protein belongs to the WTF family. As to quaternary structure, homomer. Forms protein aggregates. The two isoforms can interact with each other and with themselves. High sequence similarity is required for their interaction.

The protein resides in the spore membrane. It localises to the vacuole membrane. It is found in the ascus epiplasm. The protein localises to the cytoplasm. Its subcellular location is the endoplasmic reticulum membrane. Its function is as follows. Promotes unequal transmission of alleles from the parental zygote to progeny spores by acting as poison/antidote system where the poison and antidote proteins are produced from the same locus; the poison component is trans-acting and targets all spores within an ascus whereas the antidote component is spore-specific, leading to poisoning of all progeny that do not inherit the allele. Functionally, localizes isoform 2 to the vacuole thereby facilitating its degradation. Forms toxic aggregates that disrupt spore maturation. The polypeptide is Meiotic driver wtf33 (Schizosaccharomyces kambucha (Fission yeast)).